The primary structure comprises 75 residues: Small ribosomal subunit protein bS18 (75 aa).

This sequence belongs to the bacterial ribosomal protein bS18 family. In terms of assembly, part of the 30S ribosomal subunit. Forms a tight heterodimer with protein bS6.

Its function is as follows. Binds as a heterodimer with protein bS6 to the central domain of the 16S rRNA, where it helps stabilize the platform of the 30S subunit. The sequence is that of Small ribosomal subunit protein bS18 from Thermosipho melanesiensis (strain DSM 12029 / CIP 104789 / BI429).